The following is a 195-amino-acid chain: MASSISTGVKFVPEEDNFLQRHVAFFDRNKDGIVYPSETFQGFRAIGCGYLLSAVASVFINIGLSSKTRPGKGFSIWFPIEVKNIHLAKHGSDSGVYDKDGRFVASKFEEIFTKHAHTHRDALTNEELKQLLKANKEPNDRKGWLAGYTEWKVLHYLCKDKNGLLHKDTVRAAYDGSLFEKLEKQRSSKTSKKHP.

The EF-hand domain occupies 14 to 49 (EEDNFLQRHVAFFDRNKDGIVYPSETFQGFRAIGCG). H22 lines the heme pocket. Positions 27, 29, 31, and 38 each coordinate Ca(2+). The Proline-knot motif lies at 70–79 (PGKGFSIWFP). A Phosphoserine modification is found at S177.

The protein belongs to the caleosin family. Homodimer. The cofactor is heme b. Ca(2+) is required as a cofactor. As to expression, expressed in roots, leaves, stems, shoots, flowers and germinated seeds. Barely detected in dry seeds prior to germination. Preferentially expressed in vascular bundles and in guard cells.

The protein resides in the lipid droplet. The catalysed reaction is RH + ROOH = ROH + ROH.. Functionally, calcium-binding peroxygenase involved in the degradation of storage lipid in oil bodies. May be involved in the interaction between oil bodies and vacuoles during seed germination. Acts as a negative regulator of abscisic acid responses in non-seed tissues. The polypeptide is Probable peroxygenase 4 (PXG4) (Arabidopsis thaliana (Mouse-ear cress)).